The sequence spans 111 residues: 2Fe-2S ferredoxin (111 aa).

One can recognise a 2Fe-2S ferredoxin-type domain in the interval 5 to 107 (IKVTFVINNG…GIKVRLPSAT (103 aa)). [2Fe-2S] cluster contacts are provided by C42, C48, C51, and C88.

It belongs to the adrenodoxin/putidaredoxin family. [2Fe-2S] cluster serves as cofactor.

In terms of biological role, ferredoxin are iron-sulfur proteins that transfer electrons in a wide variety of metabolic reactions. This is 2Fe-2S ferredoxin (fdxB) from Rickettsia bellii (strain RML369-C).